We begin with the raw amino-acid sequence, 96 residues long: Co-chaperonin GroES (96 aa).

Belongs to the GroES chaperonin family. Heptamer of 7 subunits arranged in a ring. Interacts with the chaperonin GroEL.

It localises to the cytoplasm. Together with the chaperonin GroEL, plays an essential role in assisting protein folding. The GroEL-GroES system forms a nano-cage that allows encapsulation of the non-native substrate proteins and provides a physical environment optimized to promote and accelerate protein folding. GroES binds to the apical surface of the GroEL ring, thereby capping the opening of the GroEL channel. This chain is Co-chaperonin GroES, found in Shewanella piezotolerans (strain WP3 / JCM 13877).